A 139-amino-acid chain; its full sequence is Large-conductance mechanosensitive channel (139 aa).

2 helical membrane-spanning segments follow: residues Ala9–Phe29 and Ile79–Ile99.

It belongs to the MscL family. In terms of assembly, homopentamer.

The protein localises to the cell inner membrane. Its function is as follows. Channel that opens in response to stretch forces in the membrane lipid bilayer. May participate in the regulation of osmotic pressure changes within the cell. The polypeptide is Large-conductance mechanosensitive channel (Pseudomonas putida (strain GB-1)).